A 138-amino-acid chain; its full sequence is Transcription antitermination protein NusB (138 aa).

It belongs to the NusB family.

Its function is as follows. Involved in transcription antitermination. Required for transcription of ribosomal RNA (rRNA) genes. Binds specifically to the boxA antiterminator sequence of the ribosomal RNA (rrn) operons. This chain is Transcription antitermination protein NusB, found in Colwellia psychrerythraea (strain 34H / ATCC BAA-681) (Vibrio psychroerythus).